The primary structure comprises 295 residues: Glycine N-methyltransferase (295 aa).

The (6S)-5-methyl-5,6,7,8-tetrahydrofolate site is built by Ser-4 and Tyr-6. Ser-10 carries the phosphoserine modification. The S-adenosyl-L-methionine site is built by Tyr-22, Trp-31, Tyr-34, and Arg-41. Tyr-34 bears the Phosphotyrosine mark. At Lys-46 the chain carries N6-succinyllysine. Residues Ala-65, 86-88, 117-118, 139-142, and Arg-178 each bind S-adenosyl-L-methionine; these read DAS, NW, and LGNS. An N6-succinyllysine mark is found at Lys-193, Lys-198, and Lys-203. Position 217 (His-217) interacts with (6S)-5-methyl-5,6,7,8-tetrahydrofolate. S-adenosyl-L-methionine is bound at residue Tyr-223. Position 242 (Arg-242) interacts with (6S)-5-methyl-5,6,7,8-tetrahydrofolate.

It belongs to the class I-like SAM-binding methyltransferase superfamily. Glycine N-methyltransferase family. Homotetramer. In terms of tissue distribution, abundant in liver.

Its subcellular location is the cytoplasm. It carries out the reaction glycine + S-adenosyl-L-methionine = sarcosine + S-adenosyl-L-homocysteine + H(+). With respect to regulation, inhibited by 5-methyltetrahydrofolate monoglutamate and by 5-methyltetrahydrofolate pentaglutamate, inhibition is much more effective by the pentaglutamate form than by the monoglutamate form. Two molecules of 5-methyltetrahydrofolate are bound per tetramer. The binding sites are localized between subunits. Inhibitor binding may preclude movements of the polypeptide chain that are necessary for enzyme activity. Catalyzes the methylation of glycine by using S-adenosylmethionine (AdoMet) to form N-methylglycine (sarcosine) with the concomitant production of S-adenosylhomocysteine (AdoHcy), a reaction regulated by the binding of 5-methyltetrahydrofolate. Plays an important role in the regulation of methyl group metabolism by regulating the ratio between S-adenosyl-L-methionine and S-adenosyl-L-homocysteine. This chain is Glycine N-methyltransferase (GNMT), found in Oryctolagus cuniculus (Rabbit).